A 484-amino-acid chain; its full sequence is Probable cytosol aminopeptidase (484 aa).

Mn(2+) contacts are provided by Lys256 and Asp261. The active site involves Lys268. Asp279, Asp338, and Glu340 together coordinate Mn(2+). Arg342 is an active-site residue.

This sequence belongs to the peptidase M17 family. Mn(2+) is required as a cofactor.

It is found in the cytoplasm. It carries out the reaction Release of an N-terminal amino acid, Xaa-|-Yaa-, in which Xaa is preferably Leu, but may be other amino acids including Pro although not Arg or Lys, and Yaa may be Pro. Amino acid amides and methyl esters are also readily hydrolyzed, but rates on arylamides are exceedingly low.. The catalysed reaction is Release of an N-terminal amino acid, preferentially leucine, but not glutamic or aspartic acids.. Functionally, presumably involved in the processing and regular turnover of intracellular proteins. Catalyzes the removal of unsubstituted N-terminal amino acids from various peptides. The chain is Probable cytosol aminopeptidase from Actinobacillus succinogenes (strain ATCC 55618 / DSM 22257 / CCUG 43843 / 130Z).